Consider the following 447-residue polypeptide: Argininosuccinate synthase (447 aa).

ATP is bound by residues 17 to 25 (AFSGGLDTS) and alanine 43. Position 99 (tyrosine 99) interacts with L-citrulline. 2 residues coordinate ATP: glycine 129 and threonine 131. L-aspartate-binding residues include threonine 131, asparagine 135, and aspartate 136. An L-citrulline-binding site is contributed by asparagine 135. ATP is bound at residue aspartate 136. Positions 139 and 192 each coordinate L-citrulline. Residue aspartate 194 coordinates ATP. Positions 201, 203, and 280 each coordinate L-citrulline.

This sequence belongs to the argininosuccinate synthase family. Type 2 subfamily. As to quaternary structure, homotetramer.

The protein resides in the cytoplasm. The catalysed reaction is L-citrulline + L-aspartate + ATP = 2-(N(omega)-L-arginino)succinate + AMP + diphosphate + H(+). It participates in amino-acid biosynthesis; L-arginine biosynthesis; L-arginine from L-ornithine and carbamoyl phosphate: step 2/3. The protein is Argininosuccinate synthase of Salmonella dublin (strain CT_02021853).